We begin with the raw amino-acid sequence, 250 residues long: Proteasome subunit alpha type-7-like (250 aa).

S132 is a glycosylation site (O-linked (GlcNAc) serine).

The protein belongs to the peptidase T1A family. As to quaternary structure, the 26S proteasome consists of a 20S proteasome core and two 19S regulatory subunits. The 20S proteasome core is a barrel-shaped complex made of 28 subunits that are arranged in four stacked rings. The two outer rings are each formed by seven alpha subunits, and the two inner rings are formed by seven beta subunits. The proteolytic activity is exerted by three beta-subunits PSMB5, PSMB6 and PSMB7. PSMA7 interacts directly with the PSMG1-PSMG2 heterodimer which promotes 20S proteasome assembly. Interacts with HIF1A. Interacts with RAB7A. Interacts with PRKN. Interacts with ABL1 and ABL2. Interacts with EMAP2. Interacts with MAVS.

The protein resides in the cytoplasm. Its subcellular location is the nucleus. In terms of biological role, component of the 20S core proteasome complex involved in the proteolytic degradation of most intracellular proteins. This complex plays numerous essential roles within the cell by associating with different regulatory particles. Associated with two 19S regulatory particles, forms the 26S proteasome and thus participates in the ATP-dependent degradation of ubiquitinated proteins. The 26S proteasome plays a key role in the maintenance of protein homeostasis by removing misfolded or damaged proteins that could impair cellular functions, and by removing proteins whose functions are no longer required. Associated with the PA200 or PA28, the 20S proteasome mediates ubiquitin-independent protein degradation. This type of proteolysis is required in several pathways including spermatogenesis (20S-PA200 complex) or generation of a subset of MHC class I-presented antigenic peptides (20S-PA28 complex). Inhibits the transactivation function of HIF-1A under both normoxic and hypoxia-mimicking conditions. The interaction with EMAP2 increases the proteasome-mediated HIF-1A degradation under the hypoxic conditions. Plays a role in hepatitis C virus internal ribosome entry site-mediated translation. Mediates nuclear translocation of the androgen receptor (AR) and thereby enhances androgen-mediated transactivation. Promotes MAVS degradation and thereby negatively regulates MAVS-mediated innate immune response. This chain is Proteasome subunit alpha type-7-like (PSMA7L), found in Macaca fascicularis (Crab-eating macaque).